A 542-amino-acid polypeptide reads, in one-letter code: Chaperonin GroEL (542 aa).

Residues 29–32, 86–90, Gly-413, and Asp-492 each bind ATP; these read TLGP and DGTTT.

The protein belongs to the chaperonin (HSP60) family. In terms of assembly, forms a cylinder of 14 subunits composed of two heptameric rings stacked back-to-back. Interacts with the co-chaperonin GroES.

It is found in the cytoplasm. It catalyses the reaction ATP + H2O + a folded polypeptide = ADP + phosphate + an unfolded polypeptide.. Functionally, together with its co-chaperonin GroES, plays an essential role in assisting protein folding. The GroEL-GroES system forms a nano-cage that allows encapsulation of the non-native substrate proteins and provides a physical environment optimized to promote and accelerate protein folding. This is Chaperonin GroEL from Nocardia asteroides.